A 172-amino-acid chain; its full sequence is Neuropeptide-like protein nlp-8 (172 aa).

The first 26 residues, 1-26 (MSQKLLPISPLQLLFLQCLLIGFTAA), serve as a signal peptide directing secretion.

Post-translationally, may be processed by convertase egl-3.

It localises to the secreted. Functionally, neuropeptide-like protein. Plays a role in behaviors associated with a sleep-like state induced by stress (SIS), acting in concert with the FARP (FMRFamide related) peptides, flp-13 and flp-24. The sequence is that of Neuropeptide-like protein nlp-8 from Caenorhabditis elegans.